The primary structure comprises 965 residues: Phosphatidylethanolamine N-methyltransferase (965 aa).

Topologically, residues 1–82 (MDRGLSTGTN…SPSEPKNLSD (82 aa)) are lumenal. Residues 34 to 54 (PTVTNASNGKDKAGKTFGRTP) form a disordered region. A helical membrane pass occupies residues 83-103 (LVVLTILAGHIFLLWILPSGA). The Cytoplasmic segment spans residues 104-106 (KIP). A helical membrane pass occupies residues 107–127 (VFAVIYLFWRSCYNAGIGWLL). Over 128–192 (HNQSHHKTLV…EYNTWLVFRR (65 aa)) the chain is Lumenal. A helical transmembrane segment spans residues 193 to 213 (LVDLILMCDFASYCLFAIACS). Over 214-220 (RHPANES) the chain is Cytoplasmic. The chain crosses the membrane as a helical span at residues 221–241 (VLMTVIRWTSGIALVLFNLWV). Residues 242 to 274 (KLDAHRVVKDYAWYWGDFFYLIDQELTFDGVFE) are Lumenal-facing. The helical transmembrane segment at 275–295 (MAPHPMYSVGYAGYYGISLMA) threads the bilayer. At 296 to 297 (AS) the chain is on the cytoplasmic side. A helical membrane pass occupies residues 298–318 (YKVLFISIIAHAAQFAFLVLV). The Lumenal portion of the chain corresponds to 319–394 (ENPHIDKTYN…LDLHRITDTS (76 aa)). Positions 326-368 (TYNPPPPRKRTITEHDAASQRSQSPDTPNAPSVSEENVPNATT) are disordered. Positions 344 to 368 (SQRSQSPDTPNAPSVSEENVPNATT) are enriched in polar residues. A helical transmembrane segment spans residues 395–415 (SILVQFLMFSLTVLTPSTPWY). Residue Gln416 is a topological domain, cytoplasmic. Residues 417-437 (FLFVANAAIWRLWYSVGIGYL) form a helical membrane-spanning segment. Over 438 to 470 (LNRQSNCKSWTRHFVKYGETPHEAWNQWKGTYH) the chain is Lumenal. The helical transmembrane segment at 471–491 (LSMVMCYASFISAVWKMYTLP) threads the bilayer. The Cytoplasmic segment spans residues 492–503 (SNWGYGLAILRH). The chain crosses the membrane as a helical span at residues 504-524 (VLGAGLISLQIWTSVSIYESL). Residues 525–559 (GEFGWFYGDFFFDESPKLTYNGIYRFLNNPERVLG) are Lumenal-facing. Residues 560–580 (LAGVWGAVLITASGTVAFLAF) form a helical membrane-spanning segment. Residues 581–965 (LSHILSLGFI…GATTPTESKE (385 aa)) are Cytoplasmic-facing.

The protein belongs to the class VI-like SAM-binding methyltransferase superfamily. CHO2 family.

It localises to the endoplasmic reticulum membrane. The enzyme catalyses a 1,2-diacyl-sn-glycero-3-phosphoethanolamine + S-adenosyl-L-methionine = a 1,2-diacyl-sn-glycero-3-phospho-N-methylethanolamine + S-adenosyl-L-homocysteine + H(+). It functions in the pathway phospholipid metabolism; phosphatidylcholine biosynthesis. In terms of biological role, catalyzes the first step of the methylation pathway of phosphatidylcholine biosynthesis, the SAM-dependent methylation of phosphatidylethanolamine (PE) to phosphatidylmonomethylethanolamine (PMME). This is Phosphatidylethanolamine N-methyltransferase from Emericella nidulans (strain FGSC A4 / ATCC 38163 / CBS 112.46 / NRRL 194 / M139) (Aspergillus nidulans).